A 339-amino-acid chain; its full sequence is Serine/threonine-protein kinase pdik1l-B (339 aa).

Residues 8-332 form the Protein kinase domain; sequence YDLIREVGRG…LELKLIQIAF (325 aa). ATP is bound by residues 14-22 and Lys37; that span reads VGRGSYGLV. Asp164 (proton acceptor) is an active-site residue.

It belongs to the protein kinase superfamily. Ser/Thr protein kinase family.

The protein localises to the nucleus. It catalyses the reaction L-seryl-[protein] + ATP = O-phospho-L-seryl-[protein] + ADP + H(+). The catalysed reaction is L-threonyl-[protein] + ATP = O-phospho-L-threonyl-[protein] + ADP + H(+). In Xenopus laevis (African clawed frog), this protein is Serine/threonine-protein kinase pdik1l-B (pdik1-b).